A 326-amino-acid polypeptide reads, in one-letter code: tRNA uridine(34) hydroxylase (326 aa).

One can recognise a Rhodanese domain in the interval 123–217 (SDPEVLLIDT…YLEEVKPEES (95 aa)). The Cysteine persulfide intermediate role is filled by Cys177. The interval 293–326 (KSRGESHIGSDVKQVIEARRQDKVERKQRQHQEG) is disordered.

It belongs to the TrhO family.

It catalyses the reaction uridine(34) in tRNA + AH2 + O2 = 5-hydroxyuridine(34) in tRNA + A + H2O. Catalyzes oxygen-dependent 5-hydroxyuridine (ho5U) modification at position 34 in tRNAs. The protein is tRNA uridine(34) hydroxylase of Shewanella loihica (strain ATCC BAA-1088 / PV-4).